Here is a 287-residue protein sequence, read N- to C-terminus: Uroporphyrinogen-III C-methyltransferase (287 aa).

The segment covering 1-10 (MAGKTVTNGA) has biased composition (polar residues). The segment at 1–24 (MAGKTVTNGAAQGKAARSGADGAV) is disordered. Residues Pro40, 116-118 (GGD), Thr146, and Met199 each bind S-adenosyl-L-methionine.

Belongs to the precorrin methyltransferase family.

The catalysed reaction is uroporphyrinogen III + 2 S-adenosyl-L-methionine = precorrin-2 + 2 S-adenosyl-L-homocysteine + H(+). It functions in the pathway porphyrin-containing compound metabolism; siroheme biosynthesis; precorrin-2 from uroporphyrinogen III: step 1/1. Functionally, catalyzes the methylation of both C-2 and C-7 of uroporphyrinogen III leading to precorrin-1 and precorrin-2; their oxidative esterification gives respectively factor I octamethyl ester and sirohydrochlorin. Inactivation of uroporphyrinogen-III methyltransferase results in the loss of nitrite and nitric oxide reductase activities, but not of nitrous oxide reductase activity. Likely involved in heme D1 biosynthesis. This chain is Uroporphyrinogen-III C-methyltransferase (nirE), found in Paracoccus denitrificans (strain Pd 1222).